Here is a 74-residue protein sequence, read N- to C-terminus: MKSQMIAAVLLIAFCLCVVVTARMELQDVEDMENGFQKRRTCKDLIPVSECTDIRCRTSMKYRLNLCRKTCGSC.

An N-terminal signal peptide occupies residues 1-22 (MKSQMIAAVLLIAFCLCVVVTA). Residues 23-39 (RMELQDVEDMENGFQKR) constitute a propeptide that is removed on maturation. The ShKT domain occupies 42 to 74 (CKDLIPVSECTDIRCRTSMKYRLNLCRKTCGSC). 3 cysteine pairs are disulfide-bonded: Cys42-Cys74, Cys51-Cys67, and Cys56-Cys71.

The protein belongs to the sea anemone type 1 potassium channel toxin family. Type 1a subfamily.

Its subcellular location is the secreted. It is found in the nematocyst. In terms of biological role, potently blocks the voltage-gated potassium channel Kv1.1/KCNA1 (Ki=75 pM), KcsA (Ki~1 nM) and moderately blocks Kv1.2/KCNA2 (Ki=2.5 nM) and Kv1.3/KCNA3 (Ki=3.1 nM). Also facilitates acetylcholine release at the avian neuromuscular junction. Blockade and dissociation rate are sensitive to voltage. This is Kappa-stichotoxin-Hmg1a from Heteractis magnifica (Magnificent sea anemone).